The chain runs to 129 residues: Small ribosomal subunit protein uS11 (129 aa).

The protein belongs to the universal ribosomal protein uS11 family. Part of the 30S ribosomal subunit. Interacts with proteins S7 and S18. Binds to IF-3.

Functionally, located on the platform of the 30S subunit, it bridges several disparate RNA helices of the 16S rRNA. Forms part of the Shine-Dalgarno cleft in the 70S ribosome. The chain is Small ribosomal subunit protein uS11 from Actinobacillus succinogenes (strain ATCC 55618 / DSM 22257 / CCUG 43843 / 130Z).